The chain runs to 20 residues: GMP synthase [glutamine-hydrolyzing] (20 aa).

The GMPS ATP-PPase domain maps to 1–20; that stretch reads ALGDQLLSVFVDHTLVDEVA.

Homodimer.

The catalysed reaction is XMP + L-glutamine + ATP + H2O = GMP + L-glutamate + AMP + diphosphate + 2 H(+). The protein operates within purine metabolism; GMP biosynthesis; GMP from XMP (L-Gln route): step 1/1. Functionally, catalyzes the synthesis of GMP from XMP. In Fructilactobacillus sanfranciscensis (Lactobacillus sanfranciscensis), this protein is GMP synthase [glutamine-hydrolyzing] (guaA).